Consider the following 161-residue polypeptide: Small ribosomal subunit protein uS19 (161 aa).

Residues 1–19 (MARQKKYSGKGGARKKNKQ) show a composition bias toward basic residues. The disordered stretch occupies residues 1–26 (MARQKKYSGKGGARKKNKQKQSVAPR).

This sequence belongs to the universal ribosomal protein uS19 family.

In terms of biological role, protein S19 forms a complex with S13 that binds strongly to the 16S ribosomal RNA. In Methanococcus maripaludis (strain C6 / ATCC BAA-1332), this protein is Small ribosomal subunit protein uS19.